The chain runs to 385 residues: Glucans biosynthesis protein C (385 aa).

10 helical membrane passes run 17–37 (AWLM…SHTW), 60–80 (MLVF…RYPL), 91–111 (VGIP…IMLQ), 137–157 (ISHL…VWIF), 173–193 (KFSM…YAVI), 212–232 (FIVM…LAFI), 239–259 (LFTT…VAYL), 274–294 (TESV…FSFG), 311–331 (ASLF…AYIT), and 338–358 (WLGF…LYEI).

This sequence belongs to the acyltransferase 3 family. OpgC subfamily.

It is found in the cell membrane. It participates in glycan metabolism; osmoregulated periplasmic glucan (OPG) biosynthesis. In terms of biological role, necessary for the succinyl substitution of periplasmic glucans. Could catalyze the transfer of succinyl residues from the cytoplasmic side of the membrane to the nascent glucan backbones on the periplasmic side of the membrane. The polypeptide is Glucans biosynthesis protein C (Shigella boydii serotype 4 (strain Sb227)).